The sequence spans 511 residues: MSKQPVALIILDGFALRDETYGNAVAQANKPNFDRYWNEYPHTMLKACGEAVGLPEGQMGNSEVGHLNIGAGRIVYQSLTRVNIAIREGEFDRNETFLAAMNHVKQHGTSLHLFGLLSDGGVHSHIHHLYALLRLAAKEGVKRVYIHGFLDGRDVGPQTAPQYIKELQEKIKEYGVGEIATLSGRYYSMDRDKRWDRVEKAYRAMVYGEGPTYRDPLECIEDSYKHGIYDEFVLPSVIVREDGRPVATIQDNDAIIFYNFRPDRAIQISNTFTNEDFREFDRGPKHPKHLFFVCLTHFSETVKGYVAFKPTNLDNTLGEVLSQHGLRQLRIAETEKYPHVTFFMSGGREEKFPGEDRILINSPKVPTYDLKPEMSAYEVTDALLKEIEADKYDAIILNYANPDMVGHSGKLEPTIKAVEAVDECLGKVVDAILAKGGIAIITADHGNADEVLTPDGKPQTAHTTNPVPVIVTKKGIKLRDGGILGDLAPTMLDLLGLPQPKEMTGKSLIVK.

Residue D12 participates in Mn(2+) binding. Y36 is subject to Phosphotyrosine. S62 is a binding site for Mn(2+). Catalysis depends on S62, which acts as the Phosphoserine intermediate. Residues H123, 153-154 (RD), R185, R191, 261-264 (RPDR), and K336 contribute to the substrate site. D403, H407, D444, H445, and H462 together coordinate Mn(2+).

The protein belongs to the BPG-independent phosphoglycerate mutase family. In terms of assembly, monomer. Mn(2+) serves as cofactor.

The enzyme catalyses (2R)-2-phosphoglycerate = (2R)-3-phosphoglycerate. Its pathway is carbohydrate degradation; glycolysis; pyruvate from D-glyceraldehyde 3-phosphate: step 3/5. Catalyzes the interconversion of 2-phosphoglycerate and 3-phosphoglycerate. This Geobacillus kaustophilus (strain HTA426) protein is 2,3-bisphosphoglycerate-independent phosphoglycerate mutase.